The sequence spans 368 residues: Alkaline phosphatase L (368 aa).

A signal peptide spans 1–23 (MFKRSLIAASLSVAALVSAQAMA).

Belongs to the PstS family. As to quaternary structure, homodimer.

The protein resides in the secreted. It localises to the periplasm. It carries out the reaction a phosphate monoester + H2O = an alcohol + phosphate. Has both a phosphomonoesterase and phosphodiesterase activity. The polypeptide is Alkaline phosphatase L (Pseudomonas aeruginosa (strain ATCC 15692 / DSM 22644 / CIP 104116 / JCM 14847 / LMG 12228 / 1C / PRS 101 / PAO1)).